The sequence spans 217 residues: Large ribosomal subunit protein uL29m (217 aa).

This sequence belongs to the universal ribosomal protein uL29 family. In terms of assembly, component of the mitochondrial large ribosomal subunit. Mature mitochondrial ribosomes consist of a small (37S) and a large (54S) subunit. The 37S subunit contains at least 33 different proteins and 1 molecule of RNA (15S). The 54S subunit contains at least 45 different proteins and 1 molecule of RNA (21S).

It localises to the mitochondrion. The protein is Large ribosomal subunit protein uL29m (mrpl4) of Aspergillus fumigatus (strain ATCC MYA-4609 / CBS 101355 / FGSC A1100 / Af293) (Neosartorya fumigata).